A 151-amino-acid chain; its full sequence is Multiprotein-bridging factor 1 (151 aa).

Disordered stretches follow at residues 1-29 (MSDW…ARSQ) and 78-98 (DPNV…SQKD). The interval 41–119 (VVSVDKKYGS…VNDYEAARAI (79 aa)) is essential for TBP-binding. The region spanning 85 to 139 (ISRARTDKKMSQKDLATKINEKPTVVNDYEAARAIPNQQVLSKLERALGVKLRGN) is the HTH cro/C1-type domain. Over residues 88 to 98 (ARTDKKMSQKD) the composition is skewed to basic and acidic residues. A DNA-binding region (H-T-H motif) is located at residues 96 to 115 (QKDLATKINEKPTVVNDYEA). The residue at position 143 (serine 143) is a Phosphoserine.

It belongs to the MBF1 family. As to quaternary structure, interacts with TBP and the transcription factor GCN4. Interacts with RPS3/us3.

The protein localises to the cytoplasm. It localises to the nucleus. Transcriptional coactivator that stimulates GCN4-dependent transcriptional activity by bridging the DNA-binding region of GCN4 and TBP (SPT15), thereby recruiting TBP to GCN4-bound promoters. Involved in induction of the ribosome quality control (RQC) pathway; a pathway that degrades nascent peptide chains during problematic translation. Required to prevent stalled ribosomes from frameshifting. The sequence is that of Multiprotein-bridging factor 1 (MBF1) from Saccharomyces cerevisiae (strain ATCC 204508 / S288c) (Baker's yeast).